Here is a 930-residue protein sequence, read N- to C-terminus: Isoleucine--tRNA ligase (930 aa).

The 'HIGH' region motif lies at 57 to 67 (PYANGHIHLGT). Glu-559 lines the L-isoleucyl-5'-AMP pocket. A 'KMSKS' region motif is present at residues 600 to 604 (KMSKS). Lys-603 is a binding site for ATP. Cys-899, Cys-902, Cys-918, and Cys-921 together coordinate Zn(2+).

The protein belongs to the class-I aminoacyl-tRNA synthetase family. IleS type 1 subfamily. As to quaternary structure, monomer. It depends on Zn(2+) as a cofactor.

The protein localises to the cytoplasm. It catalyses the reaction tRNA(Ile) + L-isoleucine + ATP = L-isoleucyl-tRNA(Ile) + AMP + diphosphate. Functionally, catalyzes the attachment of isoleucine to tRNA(Ile). As IleRS can inadvertently accommodate and process structurally similar amino acids such as valine, to avoid such errors it has two additional distinct tRNA(Ile)-dependent editing activities. One activity is designated as 'pretransfer' editing and involves the hydrolysis of activated Val-AMP. The other activity is designated 'posttransfer' editing and involves deacylation of mischarged Val-tRNA(Ile). This Desulforudis audaxviator (strain MP104C) protein is Isoleucine--tRNA ligase.